Reading from the N-terminus, the 541-residue chain is Cytochrome bc1 complex cytochrome b subunit (541 aa).

Residues phenylalanine 36–leucine 56 form a helical membrane-spanning segment. The heme site is built by histidine 105 and histidine 119. The next 3 membrane-spanning stretches (helical) occupy residues alanine 109–phenylalanine 129, tryptophan 137–leucine 157, and isoleucine 169–phenylalanine 189. Residues histidine 206 and histidine 221 each coordinate heme. Helical transmembrane passes span valine 207–tyrosine 227, serine 256–isoleucine 276, valine 325–isoleucine 345, leucine 371–tryptophan 391, and isoleucine 408–leucine 428.

Belongs to the cytochrome b family. The cytochrome bc1 complex is composed of a cytochrome b (QcrB), the Rieske protein iron-sulfur (QcrA) and a diheme cytochrome c (QcrC) subunit. The cofactor is heme.

Its subcellular location is the cell membrane. It catalyses the reaction a quinol + 2 Fe(III)-[cytochrome c](out) = a quinone + 2 Fe(II)-[cytochrome c](out) + 2 H(+)(out). Functionally, cytochrome b subunit of the cytochrome bc1 complex, an essential component of the respiratory electron transport chain required for ATP synthesis. The bc1 complex catalyzes the oxidation of menaquinol and the reduction of cytochrome c in the respiratory chain. The bc1 complex operates through a Q-cycle mechanism that couples electron transfer to generation of the proton gradient that drives ATP synthesis. This Corynebacterium efficiens (strain DSM 44549 / YS-314 / AJ 12310 / JCM 11189 / NBRC 100395) protein is Cytochrome bc1 complex cytochrome b subunit (qcrB).